The following is a 206-amino-acid chain: Holliday junction branch migration complex subunit RuvA (206 aa).

The domain I stretch occupies residues 1-64 (MIGKLKGTVD…EDQIRLFGFV (64 aa)). A domain II region spans residues 65–143 (TEAEREWFRL…AFTAADPGLA (79 aa)). A flexible linker region spans residues 144–154 (RLAADVEATEA). Residues 154 to 206 (AAGGALADAVSALVNLGYGQAQAHTAIAAAGRKAGEDATTETLIRLGLKELAK) are domain III.

Belongs to the RuvA family. In terms of assembly, homotetramer. Forms an RuvA(8)-RuvB(12)-Holliday junction (HJ) complex. HJ DNA is sandwiched between 2 RuvA tetramers; dsDNA enters through RuvA and exits via RuvB. An RuvB hexamer assembles on each DNA strand where it exits the tetramer. Each RuvB hexamer is contacted by two RuvA subunits (via domain III) on 2 adjacent RuvB subunits; this complex drives branch migration. In the full resolvosome a probable DNA-RuvA(4)-RuvB(12)-RuvC(2) complex forms which resolves the HJ.

It localises to the cytoplasm. Its function is as follows. The RuvA-RuvB-RuvC complex processes Holliday junction (HJ) DNA during genetic recombination and DNA repair, while the RuvA-RuvB complex plays an important role in the rescue of blocked DNA replication forks via replication fork reversal (RFR). RuvA specifically binds to HJ cruciform DNA, conferring on it an open structure. The RuvB hexamer acts as an ATP-dependent pump, pulling dsDNA into and through the RuvAB complex. HJ branch migration allows RuvC to scan DNA until it finds its consensus sequence, where it cleaves and resolves the cruciform DNA. This is Holliday junction branch migration complex subunit RuvA from Azorhizobium caulinodans (strain ATCC 43989 / DSM 5975 / JCM 20966 / LMG 6465 / NBRC 14845 / NCIMB 13405 / ORS 571).